The following is a 348-amino-acid chain: N-formyl peptide receptor 2 (348 aa).

N-linked (GlcNAc...) asparagine glycosylation occurs at N1. At 1–24 the chain is on the extracellular side; the sequence is NFSTPLNEHEEVSYESAGYTVLQI. The helical transmembrane segment at 25 to 47 threads the bilayer; the sequence is LPLVVLGVTFVLGVLGNGLVIWV. Residues 48–58 lie on the Cytoplasmic side of the membrane; it reads AGFRMTRTVTT. The helical transmembrane segment at 59-80 threads the bilayer; it reads ICYLNLPLADFSFTATLPFLIV. The Extracellular portion of the chain corresponds to 81 to 97; that stretch reads SMAMGEKWPFGWFLCKL. C95 and C173 form a disulfide bridge. A helical membrane pass occupies residues 98-118; the sequence is IHIVVDINLFGSVFLIGFIAL. Residues 119-137 are Cytoplasmic-facing; the sequence is DRCICVLHPVWAQNHRTVS. The chain crosses the membrane as a helical span at residues 138 to 159; sequence LAMKVIIGPWILALVLTLPVFL. The Extracellular segment spans residues 160 to 202; sequence FLTTVTIPNGDTYCTFNFASWGGTPEERKNVAITMLTARGIIR. The chain crosses the membrane as a helical span at residues 203 to 223; that stretch reads FVIGFSMPMSIVAICYGLIAA. Topologically, residues 224–239 are cytoplasmic; it reads KIHKKGMIKSSRPLRV. Residues 240–263 form a helical membrane-spanning segment; sequence LTAVVASFFICWFPFQLVALLSTV. Topologically, residues 264–283 are extracellular; the sequence is WLKEMLFYGKYKIINILVNP. Residues 284 to 303 form a helical membrane-spanning segment; sequence TSSLAFFNSCLNPMLYVFVG. Topologically, residues 304-348 are cytoplasmic; sequence QDFRERLIRSLPTSLERALSEDSAPTNDTAAKCASPPAETELQAM. Residues 323 to 348 are disordered; that stretch reads SEDSAPTNDTAAKCASPPAETELQAM.

This sequence belongs to the G-protein coupled receptor 1 family. As to quaternary structure, interacts with APP; the interaction takes place at the cell surface and the complex is then rapidly internalized.

The protein localises to the cell membrane. Functionally, low affinity receptor for N-formyl-methionyl peptides, which are powerful neutrophil chemotactic factors. Binding of FMLP to the receptor causes activation of neutrophils. This response is mediated via a G-protein that activates a phosphatidylinositol-calcium second messenger system. Receptor for the chemokine-like protein FAM19A5, mediating FAM19A5-stimulated macrophage chemotaxis and the inhibitory effect on TNFSF11/RANKL-induced osteoclast differentiation. The sequence is that of N-formyl peptide receptor 2 (FPR2) from Pongo pygmaeus (Bornean orangutan).